The following is a 300-amino-acid chain: Epimerase family protein SAV0769 (300 aa).

This sequence belongs to the NAD(P)-dependent epimerase/dehydratase family. SDR39U1 subfamily.

This is Epimerase family protein SAV0769 from Staphylococcus aureus (strain Mu50 / ATCC 700699).